Reading from the N-terminus, the 266-residue chain is Small ribosomal subunit protein uS2 (266 aa).

This sequence belongs to the universal ribosomal protein uS2 family.

This chain is Small ribosomal subunit protein uS2, found in Paramagnetospirillum magneticum (strain ATCC 700264 / AMB-1) (Magnetospirillum magneticum).